The sequence spans 439 residues: Probable aspartic proteinase GIP2 (439 aa).

Positions 1-23 (MASSCCLHAILLCSLLFITSTTA) are cleaved as a signal peptide. Positions 47–420 (YLTQIQQRTP…DLARSRLGFT (374 aa)) constitute a Peptidase A1 domain. 4 N-linked (GlcNAc...) asparagine glycosylation sites follow: Asn-116, Asn-280, Asn-323, and Asn-434.

The protein belongs to the peptidase A1 family. As to quaternary structure, interacts with the Phytophtora parasitica xyloglucanase XEG1 and xyloglucanase-like XLP1. Possesses stronger binding affinity with XLP1, a truncated paralog of P.parasitica XEG1 which has no enzyme activity.

Its subcellular location is the secreted. It is found in the extracellular space. It localises to the apoplast. In terms of biological role, involved in plant defense against Phytophtora parasitica. Contributes positively to Nicotiana resistance against P.parasitica. Binds the P.parasitica xyloglucanase XEG1 and inhibits its cell wall degrading enzyme activity and its contribution as P.parasitica virulence factor. XEG1 acts as an important virulence factor during P.parasitica infection but also acts as a pathogen-associated molecular pattern (PAMP) in Nictotiana species, where it can trigger defense responses including cell death. Functionally, (Microbial infection) Possesses stronger binding affinity with XLP1, a truncated paralog of P.parasitica XEG1 which has no enzyme activity. Is impaired in its inhibitor activity towards the P.parasitica xyloglucanase XEG1 when hijacked by XLP1 binding. This chain is Probable aspartic proteinase GIP2, found in Nicotiana benthamiana.